Here is a 244-residue protein sequence, read N- to C-terminus: NAD(P)H-hydrate epimerase (244 aa).

The YjeF N-terminal domain maps to isoleucine 35–arginine 240. (6S)-NADPHX is bound at residue asparagine 82–aspartate 86. K(+)-binding residues include asparagine 83 and aspartate 150. Residues glycine 154–proline 160, tyrosine 165, and aspartate 183 each bind (6S)-NADPHX. Threonine 186 is a K(+) binding site.

Belongs to the NnrE/AIBP family. K(+) serves as cofactor.

It carries out the reaction (6R)-NADHX = (6S)-NADHX. The catalysed reaction is (6R)-NADPHX = (6S)-NADPHX. Functionally, catalyzes the epimerization of the S- and R-forms of NAD(P)HX, a damaged form of NAD(P)H that is a result of enzymatic or heat-dependent hydration. This is a prerequisite for the S-specific NAD(P)H-hydrate dehydratase to allow the repair of both epimers of NAD(P)HX. The protein is NAD(P)H-hydrate epimerase of Rhodopirellula baltica (strain DSM 10527 / NCIMB 13988 / SH1).